We begin with the raw amino-acid sequence, 709 residues long: NAD(P)H-quinone oxidoreductase subunit 5, chloroplastic (709 aa).

Transmembrane regions (helical) follow at residues 9–29, 40–60, 89–109, 125–145, 147–167, 219–239, 257–277, 280–300, 327–347, 354–374, 396–416, 425–445, 540–560, and 594–614; these read WIIP…LLLF, WAFP…DLSI, IDSL…FVLI, FAYM…SNLI, IYXF…FWFT, NEVH…GAVA, PTPI…IFLV, LLPL…IGII, LGYM…FHLI, ALLF…VGYS, IAFL…CFWS, WLYS…TASY, LFPM…AIPF, and FLTN…TAFL.

Belongs to the complex I subunit 5 family. NDH is composed of at least 16 different subunits, 5 of which are encoded in the nucleus.

The protein resides in the plastid. It localises to the chloroplast thylakoid membrane. It carries out the reaction a plastoquinone + NADH + (n+1) H(+)(in) = a plastoquinol + NAD(+) + n H(+)(out). It catalyses the reaction a plastoquinone + NADPH + (n+1) H(+)(in) = a plastoquinol + NADP(+) + n H(+)(out). NDH shuttles electrons from NAD(P)H:plastoquinone, via FMN and iron-sulfur (Fe-S) centers, to quinones in the photosynthetic chain and possibly in a chloroplast respiratory chain. The immediate electron acceptor for the enzyme in this species is believed to be plastoquinone. Couples the redox reaction to proton translocation, and thus conserves the redox energy in a proton gradient. The chain is NAD(P)H-quinone oxidoreductase subunit 5, chloroplastic (ndhF) from Pachira aquatica (Guiana chestnut).